Reading from the N-terminus, the 922-residue chain is GPI inositol-deacylase (922 aa).

Topologically, residues 1–11 (MFLHSVNLWNL) are cytoplasmic. Residues 12–32 (AFYVFMVFLATLGLWDVFFGF) form a helical membrane-spanning segment. Over 33-597 (EENKCSMSYM…GQVVRFHGGA (565 aa)) the chain is Lumenal. Serine 174 is an active-site residue. N-linked (GlcNAc...) asparagine glycosylation is found at asparagine 363, asparagine 402, and asparagine 558. The helical transmembrane segment at 598–618 (LPAYVVSSILLAYGGQLYSLL) threads the bilayer. Topologically, residues 619–641 (STGYCLEYSTILDKEAKPYKVDP) are cytoplasmic. A helical membrane pass occupies residues 642 to 662 (FVIMIKFLLGYKWFKELWDAV). The Lumenal portion of the chain corresponds to 663-668 (LLPELD). Residues 669–689 (AIVLTSQSMCFPLVSLILFLF) form a helical membrane-spanning segment. At 690 to 694 (GTCTA) the chain is on the cytoplasmic side. The chain crosses the membrane as a helical span at residues 695 to 715 (YWSGLLSSTSVQLLSSLWLAL). The Lumenal segment spans residues 716–733 (KRPAELPKDIKVMSPDLP). Residues 734–754 (VLTVVFLIVSWTTCGALAILL) traverse the membrane as a helical segment. Over 755–817 (SYLYYVFKVV…DAEDSLRMHS (63 aa)) the chain is Cytoplasmic. Residues 776-798 (NQPVNPKHSRRSEKKSNHHKDSA) form a disordered region. Positions 782–793 (KHSRRSEKKSNH) are enriched in basic residues. A helical membrane pass occupies residues 818-838 (TVINLLTWVVLLSMPSLIYWL). The Lumenal segment spans residues 839–894 (KNLRYYFKLSPDPCKPLAFLLIPAIAILGNTHTVSVKSSKLLKTVSQFPLPLAVGV). The chain crosses the membrane as a helical span at residues 895–915 (IAFGSSHLYRVPCFVIIPLVF). Topologically, residues 916-922 (HALCNFM) are cytoplasmic.

Belongs to the GPI inositol-deacylase family.

The protein resides in the endoplasmic reticulum membrane. In terms of biological role, GPI inositol-deacylase that catalyzes the remove of the acyl chain linked to the 2-OH position of inositol ring from the GPI-anchored protein (GPI-AP) in the endoplasmic reticulum. Initiates the post-attachment remodeling phase of GPI-AP biogenesis and participates in endoplasmic reticulum (ER)-to-Golgi transport of GPI-anchored protein. The protein is GPI inositol-deacylase of Mus musculus (Mouse).